A 406-amino-acid polypeptide reads, in one-letter code: Synaptic vesicle membrane protein VAT-1 homolog (406 aa).

Residues M1 to S57 form a disordered region. N-acetylserine is present on S2. S2 carries the phosphoserine modification. A compositionally biased stretch (low complexity) spans E9 to E22. S33 and S42 each carry phosphoserine.

The protein belongs to the zinc-containing alcohol dehydrogenase family. Quinone oxidoreductase subfamily.

The protein resides in the cytoplasm. It is found in the mitochondrion outer membrane. Its function is as follows. Plays a part in calcium-regulated keratinocyte activation in epidermal repair mechanisms. Has no effect on cell proliferation. Possesses ATPase activity. Negatively regulates mitochondrial fusion in cooperation with mitofusin proteins (MFN1-2). This is Synaptic vesicle membrane protein VAT-1 homolog (Vat1) from Mus musculus (Mouse).